A 1162-amino-acid chain; its full sequence is DNA-directed RNA polymerase subunit beta 1 (1162 aa).

Belongs to the RNA polymerase beta chain family. In terms of assembly, the RNAP catalytic core consists of 2 alpha, 1 beta, 1 beta' and 1 omega subunit. When a sigma factor is associated with the core the holoenzyme is formed, which can initiate transcription.

It carries out the reaction RNA(n) + a ribonucleoside 5'-triphosphate = RNA(n+1) + diphosphate. Functionally, DNA-dependent RNA polymerase catalyzes the transcription of DNA into RNA using the four ribonucleoside triphosphates as substrates. This is DNA-directed RNA polymerase subunit beta 1 from Nocardia farcinica (strain IFM 10152).